The following is a 186-amino-acid chain: ATP synthase subunit b (186 aa).

The chain crosses the membrane as a helical span at residues 28–48 (IVWSIIPFAVILFVFAKVVLP).

Belongs to the ATPase B chain family. As to quaternary structure, F-type ATPases have 2 components, F(1) - the catalytic core - and F(0) - the membrane proton channel. F(1) has five subunits: alpha(3), beta(3), gamma(1), delta(1), epsilon(1). F(0) has three main subunits: a(1), b(2) and c(10-14). The alpha and beta chains form an alternating ring which encloses part of the gamma chain. F(1) is attached to F(0) by a central stalk formed by the gamma and epsilon chains, while a peripheral stalk is formed by the delta and b chains.

The protein localises to the cell membrane. Functionally, f(1)F(0) ATP synthase produces ATP from ADP in the presence of a proton or sodium gradient. F-type ATPases consist of two structural domains, F(1) containing the extramembraneous catalytic core and F(0) containing the membrane proton channel, linked together by a central stalk and a peripheral stalk. During catalysis, ATP synthesis in the catalytic domain of F(1) is coupled via a rotary mechanism of the central stalk subunits to proton translocation. In terms of biological role, component of the F(0) channel, it forms part of the peripheral stalk, linking F(1) to F(0). The polypeptide is ATP synthase subunit b (Corynebacterium urealyticum (strain ATCC 43042 / DSM 7109)).